The chain runs to 271 residues: Aquaporin-1 (271 aa).

Over 1 to 11 the chain is Cytoplasmic; the sequence is MASEFKKKLFW. Residues 12–29 traverse the membrane as a helical segment; the sequence is RAVVAEFLAMILFVFISI. Topologically, residues 30 to 48 are extracellular; the sequence is GSALGFNYPVRNNQTAGAA. A glycan (N-linked (GlcNAc...) asparagine) is linked at Asn-42. A helical transmembrane segment spans residues 49–67; sequence QDNVKVSLAFGLSIATLAQ. The Cytoplasmic portion of the chain corresponds to 68-70; the sequence is SVG. Residues 71-84 lie within the membrane without spanning it; it reads HISGAHLNPAVTLG. The short motif at 78-80 is the NPA 1 element; the sequence is NPA. Residues 85–92 lie on the Cytoplasmic side of the membrane; sequence LLLSCQIS. Residues 93 to 111 traverse the membrane as a helical segment; it reads ILRAVMYIIAQCVGAIVAT. Topologically, residues 112-135 are extracellular; the sequence is AILSGITSSLPDNSLGRNELAPGV. The helical transmembrane segment at 136-155 threads the bilayer; sequence NSGQGLGIEIIGTLQLVLCV. The Cytoplasmic portion of the chain corresponds to 156-165; the sequence is LATTDRRRRD. The helical transmembrane segment at 166 to 183 threads the bilayer; the sequence is LGGSGPLAIGLSVALGHL. The Extracellular segment spans residues 184 to 188; sequence LAIDY. An intramembrane segment occupies 189–201; sequence TGCGINPARSFGS. Residues 194–196 carry the NPA 2 motif; the sequence is NPA. Over 202 to 208 the chain is Extracellular; it reads SVITHNF. Residues 209–226 form a helical membrane-spanning segment; the sequence is KDHWIFWVGPFIGGALAV. The Cytoplasmic segment spans residues 227 to 271; sequence LIYDFILAPRSSDLTDRVKVWTSGQVEEYELDGDDINSRVEMKPK. The residue at position 249 (Ser-249) is a Phosphoserine. Tyr-255 is subject to Phosphotyrosine. At Ser-264 the chain carries Phosphoserine.

Belongs to the MIP/aquaporin (TC 1.A.8) family. As to quaternary structure, homotetramer; each monomer provides an independent water pore. Component of the ankyrin-1 complex in the erythrocyte, composed of ANK1, RHCE, RHAG, SLC4A1, EPB42, GYPA, GYPB and AQP1. Interacts with EPHB2; involved in endolymph production in the inner ear. Identified in a complex with STOM. Interacts (via the N-terminal) with ANK1 (via ANK 1-5 repeats). Interacts (via the C-terminal) with EPB42.

The protein localises to the cell membrane. It catalyses the reaction H2O(in) = H2O(out). The enzyme catalyses nitric oxide(out) = nitric oxide(in). The catalysed reaction is CO2(out) = CO2(in). It carries out the reaction glycerol(in) = glycerol(out). It catalyses the reaction H2O2(out) = H2O2(in). The enzyme catalyses K(+)(in) = K(+)(out). The catalysed reaction is Na(+)(in) = Na(+)(out). Forms a water channel that facilitates the transport of water across cell membranes, playing a crucial role in water homeostasis in various tissues. Could also be permeable to small solutes including hydrogen peroxide, glycerol and gases such as amonnia (NH3), nitric oxide (NO) and carbon dioxide (CO2). Recruited to the ankyrin-1 complex, a multiprotein complex of the erythrocyte membrane, it could be part of a CO2 metabolon, linking facilitated diffusion of CO2 across the membrane, anion exchange of Cl(-)/HCO3(-) and interconversion of dissolved CO2 and carbonic acid in the cytosol. In vitro, it shows non-selective gated cation channel activity and may be permeable to cations like K(+) and Na(+) in vivo. The chain is Aquaporin-1 from Canis lupus familiaris (Dog).